A 519-amino-acid chain; its full sequence is Ribonuclease Y 1 (519 aa).

The chain crosses the membrane as a helical span at residues 3-23 (VPIVILAIIAIVVGVVGGYYL). Residues 92–120 (QREETLDRKDNSLEKRENSLNRRDKKLSA) show a composition bias toward basic and acidic residues. The interval 92–124 (QREETLDRKDNSLEKRENSLNRRDKKLSAEEQN) is disordered. A KH domain is found at 209–272 (TITVVTLPND…EVAKIALEKL (64 aa)). An HD domain is found at 335 to 428 (ALAHSIEVAK…VSTADIISAT (94 aa)).

It belongs to the RNase Y family.

It localises to the cell membrane. Functionally, endoribonuclease that initiates mRNA decay. The polypeptide is Ribonuclease Y 1 (Levilactobacillus brevis (strain ATCC 367 / BCRC 12310 / CIP 105137 / JCM 1170 / LMG 11437 / NCIMB 947 / NCTC 947) (Lactobacillus brevis)).